The primary structure comprises 340 residues: MSIDLDWDGMINSDEIDVAEWLRSLLDKQFQQLDLPRNIRSVSITTLSLGTIPPELEIKHISDPFPEFYAEEEAAADSHYLPPLHPPQQRRSAPSTPHIHTNTTNPIDRGIASYFHPLGSAPLMSGLRTPLNIPSWATNGHTRTSSRLPLNTPIEAEIVESVRESTAPRTPEEREQQPVPEDREDDLQVLFRVKYTGDIRIGVEATLRLNYPSDDVVLLPMKLHLSHININSLAIMAYIKKSIYLSVICDLDDSDHAVARTGRERLDIIRDVKIDSEIGHHDTNGAALRNVGKVDRFIVDKIRSLLKAEIAWPSWIKVSMEDEDSDDEEGEEEGDQEDEH.

The 321-residue stretch at 1-321 (MSIDLDWDGM…WPSWIKVSME (321 aa)) folds into the SMP-LTD domain. 3 disordered regions span residues 79 to 107 (HYLP…TNPI), 161 to 184 (SVRE…EDRE), and 319 to 340 (SMED…EDEH). The segment covering 89 to 106 (QRRSAPSTPHIHTNTTNP) has biased composition (polar residues). Positions 321–340 (EDEDSDDEEGEEEGDQEDEH) are enriched in acidic residues.

Belongs to the MDM12 family. As to quaternary structure, component of the ER-mitochondria encounter structure (ERMES) or MDM complex, composed of MMM1, MDM10, MDM12 and MDM34. An MMM1 homodimer associates with one molecule of MDM12 on each side in a pairwise head-to-tail manner, and the SMP-LTD domains of MMM1 and MDM12 generate a continuous hydrophobic tunnel for phospholipid trafficking.

The protein resides in the mitochondrion outer membrane. Its subcellular location is the endoplasmic reticulum membrane. Functionally, component of the ERMES/MDM complex, which serves as a molecular tether to connect the endoplasmic reticulum (ER) and mitochondria. Components of this complex are involved in the control of mitochondrial shape and protein biogenesis, and function in nonvesicular lipid trafficking between the ER and mitochondria. MDM12 is required for the interaction of the ER-resident membrane protein MMM1 and the outer mitochondrial membrane-resident beta-barrel protein MDM10. The MDM12-MMM1 subcomplex functions in the major beta-barrel assembly pathway that is responsible for biogenesis of all mitochondrial outer membrane beta-barrel proteins, and acts in a late step after the SAM complex. The MDM10-MDM12-MMM1 subcomplex further acts in the TOM40-specific pathway after the action of the MDM12-MMM1 complex. Essential for establishing and maintaining the structure of mitochondria and maintenance of mtDNA nucleoids. The sequence is that of Mitochondrial distribution and morphology protein 12 from Yarrowia lipolytica (strain CLIB 122 / E 150) (Yeast).